The primary structure comprises 170 residues: Lipoprotein signal peptidase (170 aa).

3 helical membrane passes run 9–29 (FNIF…KYLV), 72–92 (IFFI…ALKE), and 95–117 (CITR…DRLF). Residues Asp124 and Asp146 contribute to the active site. Residues 143-163 (NFADSYVVIGMILFLVYDFFI) form a helical membrane-spanning segment.

This sequence belongs to the peptidase A8 family.

It localises to the cell inner membrane. It carries out the reaction Release of signal peptides from bacterial membrane prolipoproteins. Hydrolyzes -Xaa-Yaa-Zaa-|-(S,diacylglyceryl)Cys-, in which Xaa is hydrophobic (preferably Leu), and Yaa (Ala or Ser) and Zaa (Gly or Ala) have small, neutral side chains.. Its pathway is protein modification; lipoprotein biosynthesis (signal peptide cleavage). Functionally, this protein specifically catalyzes the removal of signal peptides from prolipoproteins. In Borrelia garinii subsp. bavariensis (strain ATCC BAA-2496 / DSM 23469 / PBi) (Borreliella bavariensis), this protein is Lipoprotein signal peptidase.